A 272-amino-acid chain; its full sequence is D-aminoacyl-tRNA deacylase (272 aa).

Monomer. Zn(2+) serves as cofactor.

It catalyses the reaction a D-aminoacyl-tRNA + H2O = a tRNA + a D-alpha-amino acid + H(+). The catalysed reaction is glycyl-tRNA(Ala) + H2O = tRNA(Ala) + glycine + H(+). It carries out the reaction D-tyrosyl-tRNA(Tyr) + H2O = D-tyrosine + tRNA(Tyr). D-aminoacyl-tRNA deacylase with broad substrate specificity. By recycling D-aminoacyl-tRNA to D-amino acids and free tRNA molecules, this enzyme counteracts the toxicity associated with the formation of D-aminoacyl-tRNA entities in vivo. Catalyzes the hydrolysis of D-tyrosyl-tRNA(Tyr) and D-aspartyl-tRNA(Asp). In Pyrococcus abyssi (strain GE5 / Orsay), this protein is D-aminoacyl-tRNA deacylase.